An 88-amino-acid polypeptide reads, in one-letter code: Small ribosomal subunit protein bS16 (88 aa).

Belongs to the bacterial ribosomal protein bS16 family.

The chain is Small ribosomal subunit protein bS16 from Syntrophomonas wolfei subsp. wolfei (strain DSM 2245B / Goettingen).